Consider the following 196-residue polypeptide: Imidazole glycerol phosphate synthase subunit HisH (196 aa).

Positions N2 to M196 constitute a Glutamine amidotransferase type-1 domain. The active-site Nucleophile is the C77. Residues H178 and E180 contribute to the active site.

In terms of assembly, heterodimer of HisH and HisF.

It localises to the cytoplasm. The catalysed reaction is 5-[(5-phospho-1-deoxy-D-ribulos-1-ylimino)methylamino]-1-(5-phospho-beta-D-ribosyl)imidazole-4-carboxamide + L-glutamine = D-erythro-1-(imidazol-4-yl)glycerol 3-phosphate + 5-amino-1-(5-phospho-beta-D-ribosyl)imidazole-4-carboxamide + L-glutamate + H(+). It catalyses the reaction L-glutamine + H2O = L-glutamate + NH4(+). Its pathway is amino-acid biosynthesis; L-histidine biosynthesis; L-histidine from 5-phospho-alpha-D-ribose 1-diphosphate: step 5/9. In terms of biological role, IGPS catalyzes the conversion of PRFAR and glutamine to IGP, AICAR and glutamate. The HisH subunit catalyzes the hydrolysis of glutamine to glutamate and ammonia as part of the synthesis of IGP and AICAR. The resulting ammonia molecule is channeled to the active site of HisF. The protein is Imidazole glycerol phosphate synthase subunit HisH of Shigella flexneri.